Consider the following 13041-residue polypeptide: Nonribosomal peptide synthetase kk1B (13041 aa).

The interval 267–663 (ANRVVDTPQK…GRRDSQIKIR (397 aa)) is adenylation 1. The Carrier 1 domain occupies 788–864 (ASLMTEGITL…GLINVMQQSS (77 aa)). At Ser825 the chain carries O-(pantetheine 4'-phosphoryl)serine. The condensation 1 stretch occupies residues 882–1313 (SFAQGRLWFL…TPIAHLQLTD (432 aa)). The adenylation 2 stretch occupies residues 1341 to 1736 (FQKQVAACPN…GRMDFQIKIR (396 aa)). One can recognise a Carrier 2 domain in the interval 1865 to 1939 (AARNEIEAVL…NLAATIKRGS (75 aa)). Ser1899 carries the post-translational modification O-(pantetheine 4'-phosphoryl)serine. The tract at residues 1957–2383 (SFAQGRLWFL…DQPQTPLALL (427 aa)) is condensation 2. Positions 2418-2812 (QVAASPNATA…GRMDQQIKIR (395 aa)) are adenylation 3. Positions 2891–3023 (VGNDFMGWTS…EYLSKVLYAL (133 aa)) are methyltransferase (M) domain 1. Residues 3353-3427 (GARNETEAVL…DLAASIRRGS (75 aa)) form the Carrier 3 domain. Ser3387 carries the O-(pantetheine 4'-phosphoryl)serine modification. The condensation 3 stretch occupies residues 3445–3869 (SFAQGRLWFL…DQPQIPIAVL (425 aa)). Residues 3901–4300 (FRAQVVACPD…GRMDQQVKIR (400 aa)) are adenylation 4. Residues 4412–4486 (PPRNEIETIL…NLAAAVQRGS (75 aa)) enclose the Carrier 4 domain. Ser4446 bears the O-(pantetheine 4'-phosphoryl)serine mark. The tract at residues 4504 to 4935 (SFAQGRLWFL…TPIAALSLTD (432 aa)) is condensation 4. The tract at residues 4963–5362 (FREQVATYPD…GRMDRQLKIR (400 aa)) is adenylation 5. Residues 5430–5567 (TYAELDTLVK…VAQYFPTPEY (138 aa)) form a methyltransferase (M) domain 2 region. Residues 5897 to 5971 (QPRNEVEAVL…DLAAAIQRGS (75 aa)) enclose the Carrier 5 domain. Ser5931 is modified (O-(pantetheine 4'-phosphoryl)serine). The condensation 5 stretch occupies residues 5989-6416 (SYAQGRLWFL…DQPQTPLALL (428 aa)). The tract at residues 6451-6845 (QVAASPNATA…GRMDQQIKIR (395 aa)) is adenylation 6. A methyltransferase (M) domain 3 region spans residues 6924-7056 (VGNDFMGWTS…EYLSKVLYAL (133 aa)). Residues 7386 to 7460 (GARNEIEAAL…DLAGAVQRGS (75 aa)) enclose the Carrier 6 domain. An O-(pantetheine 4'-phosphoryl)serine modification is found at Ser7420. The tract at residues 7478–7901 (SFAQGRLWFL…GLETPRLPIS (424 aa)) is condensation 6. The interval 7934-8335 (FRTQVAASPD…GRMDRQLKIR (402 aa)) is adenylation 7. Residues 8404 to 8540 (YAEIEEIDSS…AQYFPSPEYL (137 aa)) form a methyltransferase (M) domain 4 region. The 75-residue stretch at 8871 to 8945 (GPRNEIEALL…DLAASIQRGS (75 aa)) folds into the Carrier 7 domain. Ser8905 bears the O-(pantetheine 4'-phosphoryl)serine mark. A condensation 7 region spans residues 8963 to 9392 (SFAQGRLWFL…PKTPIAVLPL (430 aa)). The interval 9422-9822 (FRQQVAARPD…SRMDQQVKIR (401 aa)) is adenylation 8. The Carrier 8 domain maps to 9943–10017 (PPTNDMERIL…DLASTIKQDS (75 aa)). Ser9977 carries the post-translational modification O-(pantetheine 4'-phosphoryl)serine. The tract at residues 10035–10462 (SFAQGRLWFL…ETPQTPLAVL (428 aa)) is condensation 8. Positions 10494–10892 (FRAQVAACPD…GRMDQQIKIR (399 aa)) are adenylation 9. Residues 10959–11105 (IYAEIEEIDS…EYLADVVGAL (147 aa)) are methyltransferase (M) domain 5. The 75-residue stretch at 11428–11502 (SARNEVEAVL…DLAASIERNS (75 aa)) folds into the Carrier 9 domain. An O-(pantetheine 4'-phosphoryl)serine modification is found at Ser11462. Positions 11520–11945 (SFAQGRLWFL…EQPQTPIAVL (426 aa)) are condensation 9. An adenylation 10 region spans residues 11977-12377 (FRDQVAANPR…GRMDQQIKIR (401 aa)). A Carrier 10 domain is found at 12495–12569 (VPRNELEASL…DLALKVSSYI (75 aa)). Ser12529 carries the O-(pantetheine 4'-phosphoryl)serine modification. The interval 12647–13032 (FPANADCDKI…RMHEEFCDII (386 aa)) is condensation 10.

It belongs to the NRP synthetase family.

It functions in the pathway secondary metabolite biosynthesis. In terms of biological role, nonribosomal peptide synthetase; part of the gene cluster that mediates the biosynthesis of KK-1, a novel cyclic depsipeptide with 10 residues which is a promising active compound with high activity against many plant pathogens, especially Botrytis cinerea. The nonribosomal peptide synthetase (NRPS) kk1B catalyzes the elongation and cyclization of the decapeptide chain composed of 1 D-lactic acid residue (D-Lac), 1 pipecolic acid residue (Pip), 1 aspartic acid residue (Asp), 1 isoleucine residue (Ile), 1 glycine residue (Gly), 1 tyrosine residue (Tyr) and 4 valine residues (Val). The Asp, Ile and 3 Val residues are N-methylated by the 5 methyltransferase domains from the NRPS (found in modules 3, 5, 6, 7 and 9), whereas the Tyr residue is O-methylated by the cluster encoded O-methyltransferase kk1A. Cyclization with the hydroxy group of the D-lactic acid as a nucleophile is presumed to occur in the final module of NRPS, resulting in the formation of the depsipeptide ester bond through macrocyclization by the C-terminal C domain. The thioesterase kk1J is likely to be involved in the corrective mechanism of peptide chain synthesis. The D-lactate dehydrogenase kk1H is involved in the synthesis of D-lactic acid from pyruvic acid, which is recognized by the A domain of the first kk1B module. The pyrroline-5-carboxylate reductase kk1I is involved in the synthesis of the L-pipecolic acid residue of KK-1 from delta-1-pyrroline-5-carboxylate (P5C), a metabolic intermediate of lysine. It is still unclear how kk1C and kk1D are involved in the production of KK-1. This Curvularia clavata protein is Nonribosomal peptide synthetase kk1B.